Here is a 941-residue protein sequence, read N- to C-terminus: Heat shock protein 70 homolog (941 aa).

The tract at residues 851-887 is disordered; sequence ENQPDIPEDSEDSESEDDTTTSKDSESSEITENLALP. Residues 856-869 show a composition bias toward acidic residues; the sequence is IPEDSEDSESEDDT.

It belongs to the heat shock protein 70 family.

Probable chaperone. The chain is Heat shock protein 70 homolog from Acanthamoeba polyphaga (Amoeba).